The chain runs to 210 residues: Outer-membrane lipoprotein carrier protein (210 aa).

An N-terminal signal peptide occupies residues 1-26; the sequence is MHMIRRAAGALAVFAVAALAAAPAWA.

This sequence belongs to the LolA family. In terms of assembly, monomer.

The protein localises to the periplasm. In terms of biological role, participates in the translocation of lipoproteins from the inner membrane to the outer membrane. Only forms a complex with a lipoprotein if the residue after the N-terminal Cys is not an aspartate (The Asp acts as a targeting signal to indicate that the lipoprotein should stay in the inner membrane). This chain is Outer-membrane lipoprotein carrier protein, found in Bordetella pertussis (strain Tohama I / ATCC BAA-589 / NCTC 13251).